Reading from the N-terminus, the 238-residue chain is UPF0758 protein Ajs_3450 (238 aa).

Residues 116–238 (VFDSPQAVQH…ALSMAEQGLV (123 aa)) enclose the MPN domain. Residues His187, His189, and Asp200 each contribute to the Zn(2+) site. The short motif at 187 to 200 (HNHPSGSVQPSRAD) is the JAMM motif element.

Belongs to the UPF0758 family.

This Acidovorax sp. (strain JS42) protein is UPF0758 protein Ajs_3450.